A 316-amino-acid polypeptide reads, in one-letter code: MTKEFHHVTVLLHETVDMLDIKPDGIYVDATLGGSGHSAYLLSKLGEEGHLYCFDQDQKAIDNAQVTLKSYIDKGQVTFIKDNFRHLKARLTALGVDEIDGILYDLGVSSPQLDERERGFSYKQDAPLDMRMDRQSLLTAYEVVNTYPFNDLVKIFFKYGEDKFSKQIARKIEQARAIKPIEATTELAELIKAAKPAKELKKKGHPAKQIFQAIRIEVNDELGAADESIQDAMELLALDGRISVITFHSLEDRLTKQLFKEASTVDVPKGLPLIPEDMKPKFELVSRKPILPSHSELTANKRAHSAKLRVAKKIRK.

Residues 35-37 (SGH), aspartate 55, phenylalanine 84, aspartate 105, and glutamine 112 contribute to the S-adenosyl-L-methionine site.

This sequence belongs to the methyltransferase superfamily. RsmH family.

The protein resides in the cytoplasm. The catalysed reaction is cytidine(1402) in 16S rRNA + S-adenosyl-L-methionine = N(4)-methylcytidine(1402) in 16S rRNA + S-adenosyl-L-homocysteine + H(+). Functionally, specifically methylates the N4 position of cytidine in position 1402 (C1402) of 16S rRNA. In Streptococcus pyogenes serotype M49 (strain NZ131), this protein is Ribosomal RNA small subunit methyltransferase H.